The sequence spans 91 residues: HssA/B-like protein 52 (91 aa).

Disordered regions lie at residues 1–20 (MTLFSSISSISNPMTSSKSS) and 72–91 (GGCGGSNGSMGGGNGSCCGI).

Belongs to the hssA/B family.

The sequence is that of HssA/B-like protein 52 (hssl52) from Dictyostelium discoideum (Social amoeba).